The primary structure comprises 526 residues: ATP synthase subunit alpha (526 aa).

Residue 171–178 (GDRQVGKT) participates in ATP binding.

It belongs to the ATPase alpha/beta chains family. In terms of assembly, F-type ATPases have 2 components, CF(1) - the catalytic core - and CF(0) - the membrane proton channel. CF(1) has five subunits: alpha(3), beta(3), gamma(1), delta(1), epsilon(1). CF(0) has three main subunits: a(1), b(2) and c(9-12). The alpha and beta chains form an alternating ring which encloses part of the gamma chain. CF(1) is attached to CF(0) by a central stalk formed by the gamma and epsilon chains, while a peripheral stalk is formed by the delta and b chains.

The protein resides in the cell inner membrane. The enzyme catalyses ATP + H2O + 4 H(+)(in) = ADP + phosphate + 5 H(+)(out). In terms of biological role, produces ATP from ADP in the presence of a proton gradient across the membrane. The alpha chain is a regulatory subunit. The sequence is that of ATP synthase subunit alpha from Azobacteroides pseudotrichonymphae genomovar. CFP2.